We begin with the raw amino-acid sequence, 170 residues long: Urease accessory protein UreE (170 aa).

The interval 134–170 is disordered; sequence ESGAYGGGHHHHGDDGHHPLAPIPLRQKIHRPSDKAE.

The protein belongs to the UreE family.

It localises to the cytoplasm. Functionally, involved in urease metallocenter assembly. Binds nickel. Probably functions as a nickel donor during metallocenter assembly. The chain is Urease accessory protein UreE from Janthinobacterium sp. (strain Marseille) (Minibacterium massiliensis).